The sequence spans 420 residues: D-tagatose-1,6-bisphosphate aldolase subunit GatZ (420 aa).

Belongs to the GatZ/KbaZ family. GatZ subfamily. As to quaternary structure, forms a complex with GatY.

The protein operates within carbohydrate metabolism; D-tagatose 6-phosphate degradation; D-glyceraldehyde 3-phosphate and glycerone phosphate from D-tagatose 6-phosphate: step 2/2. Functionally, component of the tagatose-1,6-bisphosphate aldolase GatYZ that is required for full activity and stability of the Y subunit. Could have a chaperone-like function for the proper and stable folding of GatY. When expressed alone, GatZ does not show any aldolase activity. Is involved in the catabolism of galactitol. This Escherichia coli O8 (strain IAI1) protein is D-tagatose-1,6-bisphosphate aldolase subunit GatZ.